The sequence spans 252 residues: 5'-nucleotidase SurE (252 aa).

A divalent metal cation-binding residues include Asp8, Asp9, Ser39, and Asn91.

It belongs to the SurE nucleotidase family. Requires a divalent metal cation as cofactor.

The protein resides in the cytoplasm. It catalyses the reaction a ribonucleoside 5'-phosphate + H2O = a ribonucleoside + phosphate. Functionally, nucleotidase that shows phosphatase activity on nucleoside 5'-monophosphates. This chain is 5'-nucleotidase SurE, found in Legionella pneumophila (strain Paris).